Reading from the N-terminus, the 185-residue chain is Threonylcarbamoyl-AMP synthase (185 aa).

Positions 4–185 (SFRVQQAARE…LATGEVVRPG (182 aa)) constitute a YrdC-like domain.

This sequence belongs to the SUA5 family. TsaC subfamily.

It is found in the cytoplasm. It catalyses the reaction L-threonine + hydrogencarbonate + ATP = L-threonylcarbamoyladenylate + diphosphate + H2O. Its function is as follows. Required for the formation of a threonylcarbamoyl group on adenosine at position 37 (t(6)A37) in tRNAs that read codons beginning with adenine. Catalyzes the conversion of L-threonine, HCO(3)(-)/CO(2) and ATP to give threonylcarbamoyl-AMP (TC-AMP) as the acyladenylate intermediate, with the release of diphosphate. This chain is Threonylcarbamoyl-AMP synthase, found in Pseudomonas putida (strain ATCC 700007 / DSM 6899 / JCM 31910 / BCRC 17059 / LMG 24140 / F1).